Reading from the N-terminus, the 434-residue chain is Histidinol dehydrogenase (434 aa).

Y130, Q188, and N211 together coordinate NAD(+). Substrate contacts are provided by S237, Q259, and H262. Zn(2+)-binding residues include Q259 and H262. Residues E326 and H327 each act as proton acceptor in the active site. Substrate is bound by residues H327, D360, E414, and H419. Position 360 (D360) interacts with Zn(2+). H419 contributes to the Zn(2+) binding site.

It belongs to the histidinol dehydrogenase family. As to quaternary structure, homodimer. Requires Zn(2+) as cofactor.

It catalyses the reaction L-histidinol + 2 NAD(+) + H2O = L-histidine + 2 NADH + 3 H(+). It participates in amino-acid biosynthesis; L-histidine biosynthesis; L-histidine from 5-phospho-alpha-D-ribose 1-diphosphate: step 9/9. Catalyzes the sequential NAD-dependent oxidations of L-histidinol to L-histidinaldehyde and then to L-histidine. The protein is Histidinol dehydrogenase of Escherichia coli O157:H7.